The chain runs to 980 residues: Peroxisomal ATPase PEX6 (980 aa).

Arg119 is subject to Omega-N-methylarginine. Residues 470–477 (GPPGSGKT) and 744–751 (GPPGTGKT) each bind ATP.

This sequence belongs to the AAA ATPase family. In terms of assembly, interacts with PEX1; forming the PEX1-PEX6 AAA ATPase complex, which is composed of a heterohexamer formed by a trimer of PEX1-PEX6 dimers. Interacts with PEX26; interaction is direct and promotes recruitment to peroxisomal membranes. Interacts with ZFAND6.

Its subcellular location is the cytoplasm. It localises to the cytosol. It is found in the peroxisome membrane. The protein resides in the cell projection. The protein localises to the cilium. Its subcellular location is the photoreceptor outer segment. It catalyses the reaction ATP + H2O = ADP + phosphate + H(+). Component of the PEX1-PEX6 AAA ATPase complex, a protein dislocase complex that mediates the ATP-dependent extraction of the PEX5 receptor from peroxisomal membranes, an essential step for PEX5 recycling. Specifically recognizes PEX5 monoubiquitinated at 'Cys-11', and pulls it out of the peroxisome lumen through the PEX2-PEX10-PEX12 retrotranslocation channel. Extraction by the PEX1-PEX6 AAA ATPase complex is accompanied by unfolding of the TPR repeats and release of bound cargo from PEX5. The sequence is that of Peroxisomal ATPase PEX6 from Cricetulus griseus (Chinese hamster).